Reading from the N-terminus, the 386-residue chain is Zinc finger CCCH domain-containing protein 39 (386 aa).

The interval 1 to 90 (MDSSYSDSRP…SSSNPWMVPS (90 aa)) is disordered. Residues 20–37 (WNQTQMIDSMANPMNNEQ) show a composition bias toward polar residues. Residues 43–58 (LSESQSQSQPSQQLQP) are compositionally biased toward low complexity. Residues 72–85 (NPASSFPQPSSSNP) are compositionally biased toward polar residues. The C3H1-type 1 zinc finger occupies 104–131 (FYKTRMCAKFRAGTCRNGELCNFAHGIE). Positions 136–166 (PPSNWQEIVGPPPAGQDRERERERERERERP) are disordered. A compositionally biased stretch (basic and acidic residues) spans 151-166 (QDRERERERERERERP). 2 consecutive C3H1-type zinc fingers follow at residues 183–211 (ILRM…HEDL) and 269–297 (YWKT…HGQA).

The chain is Zinc finger CCCH domain-containing protein 39 from Arabidopsis thaliana (Mouse-ear cress).